The sequence spans 130 residues: Phosphoribosyl-AMP cyclohydrolase (130 aa).

A Mg(2+)-binding site is contributed by aspartate 77. A Zn(2+)-binding site is contributed by cysteine 78. Mg(2+) is bound by residues aspartate 79 and aspartate 81. The Zn(2+) site is built by cysteine 95 and cysteine 102.

The protein belongs to the PRA-CH family. Homodimer. Requires Mg(2+) as cofactor. The cofactor is Zn(2+).

The protein resides in the cytoplasm. It carries out the reaction 1-(5-phospho-beta-D-ribosyl)-5'-AMP + H2O = 1-(5-phospho-beta-D-ribosyl)-5-[(5-phospho-beta-D-ribosylamino)methylideneamino]imidazole-4-carboxamide. The protein operates within amino-acid biosynthesis; L-histidine biosynthesis; L-histidine from 5-phospho-alpha-D-ribose 1-diphosphate: step 3/9. Functionally, catalyzes the hydrolysis of the adenine ring of phosphoribosyl-AMP. This chain is Phosphoribosyl-AMP cyclohydrolase, found in Pseudomonas syringae pv. tomato (strain ATCC BAA-871 / DC3000).